The sequence spans 305 residues: tRNA dimethylallyltransferase (305 aa).

ATP is bound at residue Gly-9 to Ser-16. Thr-11 to Ser-16 contacts substrate. An interaction with substrate tRNA region spans residues Asp-34–Gln-37.

This sequence belongs to the IPP transferase family. In terms of assembly, monomer. Requires Mg(2+) as cofactor.

The enzyme catalyses adenosine(37) in tRNA + dimethylallyl diphosphate = N(6)-dimethylallyladenosine(37) in tRNA + diphosphate. Catalyzes the transfer of a dimethylallyl group onto the adenine at position 37 in tRNAs that read codons beginning with uridine, leading to the formation of N6-(dimethylallyl)adenosine (i(6)A). This is tRNA dimethylallyltransferase from Anaplasma marginale (strain Florida).